We begin with the raw amino-acid sequence, 836 residues long: TATA box-binding protein-associated factor RNA polymerase I subunit C (836 aa).

Disordered regions lie at residues 662–683 and 703–836; these read GDLS…QQDE and HRGE…RMGF. Over residues 738 to 754 the composition is skewed to polar residues; the sequence is DASSAPRSQDLSTSEAR. Residues 780 to 796 show a composition bias toward basic and acidic residues; that stretch reads RQTLRDHTDKLPLKRDT. Threonine 802 carries the post-translational modification Phosphothreonine. Positions 803–828 are enriched in polar residues; sequence PPSQASSLQTMSFRQQTPVHSGSQPP.

Component of the transcription factor SL1/TIF-IB complex, composed of TBP and at least TAF1A, TAF1B, TAF1C and TAF1D. In the complex interacts directly with TBP, TAF1A and TAF1B. Interaction of the SL1/TIF-IB subunits with TBP excludes interaction of TBP with the transcription factor IID (TFIID) subunits. Interacts with MYC and RRN3. Interacts with p53/TP53; the interaction prevents the association of SL1/TIF-IB with UBTF and represses RNA polymerase I transcription. Part of Pol I pre-initiation complex (PIC), in which Pol I core assembles with RRN3 and promoter-bound UTBF and SL1/TIF-IB complex.

The protein localises to the nucleus. The protein resides in the nucleolus. Its function is as follows. Component of the transcription factor SL1/TIF-IB complex, which is involved in the assembly of the PIC (pre-initiation complex) during RNA polymerase I-dependent transcription. The rate of PIC formation probably is primarily dependent on the rate of association of SL1/TIF-IB with the rDNA promoter. SL1/TIF-IB is involved in stabilization of nucleolar transcription factor 1/UBTF on rDNA. Formation of SL1/TIF-IB excludes the association of TBP with TFIID subunits. Recruits RNA polymerase I to the rRNA gene promoter via interaction with RRN3. In Mus musculus (Mouse), this protein is TATA box-binding protein-associated factor RNA polymerase I subunit C (Taf1c).